The chain runs to 429 residues: Enolase (429 aa).

A (2R)-2-phosphoglycerate-binding site is contributed by Gln163. The Proton donor role is filled by Glu205. Positions 242, 286, and 313 each coordinate Mg(2+). Residues Lys338, Arg367, Ser368, and Lys389 each coordinate (2R)-2-phosphoglycerate. The active-site Proton acceptor is Lys338.

It belongs to the enolase family. It depends on Mg(2+) as a cofactor.

The protein localises to the cytoplasm. It localises to the secreted. The protein resides in the cell surface. The enzyme catalyses (2R)-2-phosphoglycerate = phosphoenolpyruvate + H2O. The protein operates within carbohydrate degradation; glycolysis; pyruvate from D-glyceraldehyde 3-phosphate: step 4/5. In terms of biological role, catalyzes the reversible conversion of 2-phosphoglycerate (2-PG) into phosphoenolpyruvate (PEP). It is essential for the degradation of carbohydrates via glycolysis. This is Enolase from Pelobacter propionicus (strain DSM 2379 / NBRC 103807 / OttBd1).